We begin with the raw amino-acid sequence, 480 residues long: ATP-grasp enzyme ankG (480 aa).

The disordered stretch occupies residues 1-30 (MYQISLKATKSAAEPTSSTDASHDDRQVER). The segment covering 21–30 (ASHDDRQVER) has biased composition (basic and acidic residues).

It catalyses the reaction NK13650 D + L-aspartate + ATP = NK13650 C + AMP + diphosphate + H(+). The catalysed reaction is NK13650 B + L-aspartate + ATP = NK13650 A + AMP + diphosphate + H(+). It functions in the pathway secondary metabolite biosynthesis. Its function is as follows. ATP-grasp enzyme; part of the ank cluster that mediates the biosynthesis of NK13650 C, a highly modified cyclo-arginine-tyrosine dipeptide. AnkG catalyzes the last step of the pathway via amidation NK13650 D with L-Asp to produce NK13650 C. AnkG also amidates NK13650 B into NK13650 A. Within the pathway, the cyclodipeptide synthase ankA acts as the scaffold-generating enzyme and is responsible for formation of the cyclo-Arg-Tyr diketopiperazine (cRY) from L-Arg and L-Tyr. The ankA product cRY is desaturated by the cytochrome P450 monooxygenase ankB to yield a dehydro-cyclodipeptide intermediate. The FAD-dependent monooxygenase ankC then installs the m-OH, ankD catalyzes the attachment of L-homoserine, and ankE ligates citrate to the ankD product to yield NK13650 B. The O-methyltransferase ankF is responsible for methylation of the C-17 phenol group of NK13650 B to produce NK13650 D. Amidation of NK13650 D with L-Asp by ankG then leads to the production of NK13650 C, whereas amidation of NK13650 B produces NK13650 A. The polypeptide is ATP-grasp enzyme ankG (Aspergillus thermomutatus (Neosartorya pseudofischeri)).